Here is a 283-residue protein sequence, read N- to C-terminus: 4-diphosphocytidyl-2-C-methyl-D-erythritol kinase (283 aa).

The active site involves lysine 10. 99-109 (PMGGGLGGGSS) is a binding site for ATP. The active site involves aspartate 141.

The protein belongs to the GHMP kinase family. IspE subfamily. As to quaternary structure, homodimer.

It carries out the reaction 4-CDP-2-C-methyl-D-erythritol + ATP = 4-CDP-2-C-methyl-D-erythritol 2-phosphate + ADP + H(+). It participates in isoprenoid biosynthesis; isopentenyl diphosphate biosynthesis via DXP pathway; isopentenyl diphosphate from 1-deoxy-D-xylulose 5-phosphate: step 3/6. Catalyzes the phosphorylation of the position 2 hydroxy group of 4-diphosphocytidyl-2C-methyl-D-erythritol. This chain is 4-diphosphocytidyl-2-C-methyl-D-erythritol kinase, found in Escherichia coli O127:H6 (strain E2348/69 / EPEC).